A 249-amino-acid polypeptide reads, in one-letter code: 5'-nucleotidase SurE (249 aa).

Residues D9, D10, S40, and N92 each contribute to the a divalent metal cation site.

It belongs to the SurE nucleotidase family. Requires a divalent metal cation as cofactor.

It localises to the cytoplasm. It carries out the reaction a ribonucleoside 5'-phosphate + H2O = a ribonucleoside + phosphate. Functionally, nucleotidase that shows phosphatase activity on nucleoside 5'-monophosphates. The polypeptide is 5'-nucleotidase SurE (Shewanella sp. (strain MR-4)).